Here is a 141-residue protein sequence, read N- to C-terminus: Small ribosomal subunit protein uS19 (141 aa).

It belongs to the universal ribosomal protein uS19 family.

Protein S19 forms a complex with S13 that binds strongly to the 16S ribosomal RNA. The polypeptide is Small ribosomal subunit protein uS19 (Thermofilum pendens (strain DSM 2475 / Hrk 5)).